The sequence spans 250 residues: Phosphoribosylaminoimidazole-succinocarboxamide synthase (250 aa).

This sequence belongs to the SAICAR synthetase family.

It catalyses the reaction 5-amino-1-(5-phospho-D-ribosyl)imidazole-4-carboxylate + L-aspartate + ATP = (2S)-2-[5-amino-1-(5-phospho-beta-D-ribosyl)imidazole-4-carboxamido]succinate + ADP + phosphate + 2 H(+). It participates in purine metabolism; IMP biosynthesis via de novo pathway; 5-amino-1-(5-phospho-D-ribosyl)imidazole-4-carboxamide from 5-amino-1-(5-phospho-D-ribosyl)imidazole-4-carboxylate: step 1/2. The polypeptide is Phosphoribosylaminoimidazole-succinocarboxamide synthase (Picosynechococcus sp. (strain ATCC 27264 / PCC 7002 / PR-6) (Agmenellum quadruplicatum)).